Here is a 435-residue protein sequence, read N- to C-terminus: ATP-dependent Clp protease ATP-binding subunit ClpX 3 (435 aa).

In terms of domain architecture, ClpX-type ZB spans 1-53 (MSSDPPAKTQHCSFCGIEQGRDTPLIAGIEGQICEACVRLAEQVVANWGRKRS). The Zn(2+) site is built by C12, C15, C34, and C37. 125 to 132 (PTGTGKTL) is a binding site for ATP.

The protein belongs to the ClpX chaperone family. Component of the ClpX-ClpP complex. Forms a hexameric ring that, in the presence of ATP, binds to fourteen ClpP subunits assembled into a disk-like structure with a central cavity, resembling the structure of eukaryotic proteasomes.

ATP-dependent specificity component of the Clp protease. It directs the protease to specific substrates. Can perform chaperone functions in the absence of ClpP. This is ATP-dependent Clp protease ATP-binding subunit ClpX 3 from Methylococcus capsulatus (strain ATCC 33009 / NCIMB 11132 / Bath).